The sequence spans 492 residues: Glutamyl-tRNA(Gln) amidotransferase subunit A (492 aa).

Catalysis depends on charge relay system residues Lys-78 and Ser-158. Ser-182 acts as the Acyl-ester intermediate in catalysis.

The protein belongs to the amidase family. GatA subfamily. Heterotrimer of A, B and C subunits.

It catalyses the reaction L-glutamyl-tRNA(Gln) + L-glutamine + ATP + H2O = L-glutaminyl-tRNA(Gln) + L-glutamate + ADP + phosphate + H(+). Allows the formation of correctly charged Gln-tRNA(Gln) through the transamidation of misacylated Glu-tRNA(Gln) in organisms which lack glutaminyl-tRNA synthetase. The reaction takes place in the presence of glutamine and ATP through an activated gamma-phospho-Glu-tRNA(Gln). The sequence is that of Glutamyl-tRNA(Gln) amidotransferase subunit A from Rhodopseudomonas palustris (strain HaA2).